Reading from the N-terminus, the 158-residue chain is SsrA-binding protein (158 aa).

The protein belongs to the SmpB family.

It is found in the cytoplasm. Its function is as follows. Required for rescue of stalled ribosomes mediated by trans-translation. Binds to transfer-messenger RNA (tmRNA), required for stable association of tmRNA with ribosomes. tmRNA and SmpB together mimic tRNA shape, replacing the anticodon stem-loop with SmpB. tmRNA is encoded by the ssrA gene; the 2 termini fold to resemble tRNA(Ala) and it encodes a 'tag peptide', a short internal open reading frame. During trans-translation Ala-aminoacylated tmRNA acts like a tRNA, entering the A-site of stalled ribosomes, displacing the stalled mRNA. The ribosome then switches to translate the ORF on the tmRNA; the nascent peptide is terminated with the 'tag peptide' encoded by the tmRNA and targeted for degradation. The ribosome is freed to recommence translation, which seems to be the essential function of trans-translation. The polypeptide is SsrA-binding protein (Hydrogenovibrio crunogenus (strain DSM 25203 / XCL-2) (Thiomicrospira crunogena)).